Consider the following 192-residue polypeptide: Outer-membrane lipoprotein LolB (192 aa).

The signal sequence occupies residues 1-17; that stretch reads MTYRTLCILAFTALISA. Residue Cys18 is the site of N-palmitoyl cysteine attachment. The S-diacylglycerol cysteine moiety is linked to residue Cys18.

The protein belongs to the LolB family. Monomer.

It is found in the cell outer membrane. Functionally, plays a critical role in the incorporation of lipoproteins in the outer membrane after they are released by the LolA protein. The protein is Outer-membrane lipoprotein LolB of Marinomonas sp. (strain MWYL1).